Reading from the N-terminus, the 484-residue chain is Neuronal acetylcholine receptor subunit alpha-9 (484 aa).

A signal peptide spans 1–27 (MKRNNLSSFYVSLWLLFTATMLQAVES). At 28–240 (AKGKYAQMLF…FTLILKRKSS (213 aa)) the chain is on the extracellular side. N-linked (GlcNAc...) asparagine glycosylation is present at Asn-59. The cysteines at positions 157 and 171 are disulfide-linked. Asn-172 is a glycosylation site (N-linked (GlcNAc...) asparagine). Na(+) contacts are provided by Ser-193 and Asp-195. An intrachain disulfide couples Cys-221 to Cys-222. The next 3 membrane-spanning stretches (helical) occupy residues 241–261 (FYIF…PLGF), 271–291 (VSLG…VAEI), and 305–325 (YIAT…IMNV). At 326–462 (HHCGSEAKPV…WKKVAKVMDR (137 aa)) the chain is on the cytoplasmic side. Residues 364–395 (RREKEQEHRLEGGDMCRGGDGKSHLSSRNDDS) are disordered. A helical membrane pass occupies residues 463-483 (FFMWIFFIMVFFMSVLIIGKA).

This sequence belongs to the ligand-gated ion channel (TC 1.A.9) family. Acetylcholine receptor (TC 1.A.9.1) subfamily. Alpha-9/CHRNA9 sub-subfamily. Forms homo- or heteropentameric channels in conjunction with CHRNA10. The native outer hair cell receptor is composed of CHRNA9:CHRNA10 heterooligomers. Found in the stoichiometric form (CHRNA9)2:(CHRNA10)3. As to expression, expressed in hair cells of the cochlea (at protein level). Expressed in hair cells of the cochlea.

Its subcellular location is the synaptic cell membrane. It localises to the cell membrane. It catalyses the reaction Ca(2+)(in) = Ca(2+)(out). The enzyme catalyses K(+)(in) = K(+)(out). The catalysed reaction is Na(+)(in) = Na(+)(out). It carries out the reaction Mg(2+)(in) = Mg(2+)(out). With respect to regulation, activated by a myriad of ligands such as acetylcholine. AChR activity is inhibited by the antagonist alpha-conotoxins RgIA and GeXXA, small disulfide-constrained peptides from cone snails. In terms of biological role, component of neuronal acetylcholine receptors (nAChRs) that function as pentameric, ligand-gated cation channels with high calcium permeability among other activities. nAChRs are excitatory neurotrasnmitter receptors formed by a collection of nAChR subunits known to mediate synaptic transmission in the nervous system and the neuromuscular junction. Each nAchR subunit confers differential attributes to channel properties, including activation, deactivation and desensitization kinetics, pH sensitivity, cation permeability, and binding to allosteric modulators. Forms either homopentamers or heteropentamers with CHRNA10. Expressed in the inner ear, in sympathetic neurons and in other non-neuronal cells, such as skin keratinocytes and lymphocytes. The channel is permeable to a range of divalent cations including calcium, the influx of which may activate a potassium current which hyperpolarizes the cell membrane. The polypeptide is Neuronal acetylcholine receptor subunit alpha-9 (CHRNA9) (Gallus gallus (Chicken)).